A 232-amino-acid polypeptide reads, in one-letter code: Platelet-activating factor acetylhydrolase IB subunit alpha1 (232 aa).

The interval 1–20 (MSGEGENPASKPTPVQDVQG) is disordered. The residue at position 2 (Ser2) is an N-acetylserine. Residue Ser2 is modified to Phosphoserine. Catalysis depends on residues Ser48, Asp193, and His196.

It belongs to the 'GDSL' lipolytic enzyme family. Platelet-activating factor acetylhydrolase IB beta/gamma subunits subfamily. In terms of assembly, forms a catalytic dimer which is either homodimer (alpha1/alpha1 homodimer) or heterodimer with PAFAH1B2 (alpha1/alpha2 heterodimer). Component of the cytosolic (PAF-AH (I)) heterotetrameric enzyme, which is composed of PAFAH1B1 (beta), PAFAH1B2 (alpha2) and PAFAH1B3 (alpha1) subunits. The catalytic activity of the enzyme resides in the alpha1 (PAFAH1B3) and alpha2 (PAFAH1B2) subunits, whereas the beta subunit (PAFAH1B1) has regulatory activity. Trimer formation is not essential for the catalytic activity. Interacts with VLDLR; this interaction may modulate the Reelin pathway.

The protein resides in the cytoplasm. It carries out the reaction a 1-O-alkyl-2-acetyl-sn-glycero-3-phosphocholine + H2O = a 1-O-alkyl-sn-glycero-3-phosphocholine + acetate + H(+). The enzyme catalyses 1-O-hexadecyl-2-acetyl-sn-glycero-3-phosphocholine + H2O = 1-O-hexadecyl-sn-glycero-3-phosphocholine + acetate + H(+). The catalysed reaction is 1-O-hexadecyl-2-acetyl-sn-glycero-3-phosphate + H2O = 1-O-hexadecyl-sn-glycero-3-phosphate + acetate + H(+). Its activity is regulated as follows. Beta subunit (PAFAH1B1) inhibits the acetylhydrolase activity of the alpha1/alpha1 catalytic homodimer. Alpha1 catalytic subunit of the cytosolic type I platelet-activating factor (PAF) acetylhydrolase (PAF-AH (I)) heterotetrameric enzyme that catalyzes the hydrolyze of the acetyl group at the sn-2 position of PAF and its analogs and modulates the action of PAF. The activity and substrate specificity of PAF-AH (I) are affected by its subunit composition. Both alpha1/alpha1 homodimer (PAFAH1B3/PAFAH1B3 homodimer) and alpha1/alpha2 heterodimer(PAFAH1B3/PAFAH1B2 heterodimer) hydrolyze 1-O-alkyl-2-acetyl-sn-glycero-3-phosphoric acid (AAGPA) more efficiently than PAF, but they have little hydrolytic activity towards 1-O-alkyl-2-acetyl-sn-glycero-3-phosphorylethanolamine (AAGPE). Plays an important role during the development of brain. The polypeptide is Platelet-activating factor acetylhydrolase IB subunit alpha1 (Mus musculus (Mouse)).